A 367-amino-acid chain; its full sequence is Chorismate synthase (367 aa).

Positions 48 and 54 each coordinate NADP(+). Residues 125-127 (RSS), 238-239 (NA), Gly278, 293-297 (KPTSS), and Arg319 contribute to the FMN site.

This sequence belongs to the chorismate synthase family. Homotetramer. FMNH2 is required as a cofactor.

The enzyme catalyses 5-O-(1-carboxyvinyl)-3-phosphoshikimate = chorismate + phosphate. The protein operates within metabolic intermediate biosynthesis; chorismate biosynthesis; chorismate from D-erythrose 4-phosphate and phosphoenolpyruvate: step 7/7. Catalyzes the anti-1,4-elimination of the C-3 phosphate and the C-6 proR hydrogen from 5-enolpyruvylshikimate-3-phosphate (EPSP) to yield chorismate, which is the branch point compound that serves as the starting substrate for the three terminal pathways of aromatic amino acid biosynthesis. This reaction introduces a second double bond into the aromatic ring system. The chain is Chorismate synthase from Xanthomonas campestris pv. campestris (strain 8004).